The following is a 427-amino-acid chain: Enolase (427 aa).

Glutamine 163 provides a ligand contact to (2R)-2-phosphoglycerate. The Proton donor role is filled by glutamate 205. Mg(2+) is bound by residues aspartate 242, glutamate 285, and aspartate 312. The (2R)-2-phosphoglycerate site is built by lysine 337, arginine 366, serine 367, and lysine 388. Lysine 337 acts as the Proton acceptor in catalysis.

This sequence belongs to the enolase family. It depends on Mg(2+) as a cofactor.

The protein resides in the cytoplasm. It localises to the secreted. It is found in the cell surface. It carries out the reaction (2R)-2-phosphoglycerate = phosphoenolpyruvate + H2O. The protein operates within carbohydrate degradation; glycolysis; pyruvate from D-glyceraldehyde 3-phosphate: step 4/5. Catalyzes the reversible conversion of 2-phosphoglycerate (2-PG) into phosphoenolpyruvate (PEP). It is essential for the degradation of carbohydrates via glycolysis. This Laribacter hongkongensis (strain HLHK9) protein is Enolase.